Reading from the N-terminus, the 257-residue chain is Membrane protein insertase YidC 1 (257 aa).

Residues 1 to 20 form the signal peptide; it reads MYRKFGMAAMLVSILLLMTG. Cys-21 carries the N-palmitoyl cysteine lipid modification. Cys-21 is lipidated: S-diacylglycerol cysteine. Transmembrane regions (helical) follow at residues 35–55, 59–79, 129–149, 160–180, and 205–225; these read IWDS…ANAF, FGLA…PLMI, LAGC…YHAI, FLWF…AGIT, and VMIL…WVIG.

The protein belongs to the OXA1/ALB3/YidC family. Type 2 subfamily.

Its subcellular location is the cell membrane. Its function is as follows. Required for the insertion and/or proper folding and/or complex formation of integral membrane proteins into the membrane. Involved in integration of membrane proteins that insert both dependently and independently of the Sec translocase complex, as well as at least some lipoproteins. The sequence is that of Membrane protein insertase YidC 1 from Halalkalibacterium halodurans (strain ATCC BAA-125 / DSM 18197 / FERM 7344 / JCM 9153 / C-125) (Bacillus halodurans).